We begin with the raw amino-acid sequence, 503 residues long: Carboxyl-terminal PDZ ligand of neuronal nitric oxide synthase protein (503 aa).

A PID domain is found at 26 to 191; sequence FQHGISFEAK…ESERNSDGSG (166 aa). The disordered stretch occupies residues 170-212; sequence HTQQNADGQEDGESERNSDGSGDPGRQLTGAERVSTATAEETD. Ser183, Ser187, Ser190, and Ser262 each carry phosphoserine. The segment at 266–285 is disordered; it reads LLPSSSSSKPPGLGTGTPLS. Positions 319–360 form a coiled coil; it reads AAEAAARLEAQARVHQLLLQNKDMLQHISLLVKQVQELELKL. Phosphoserine is present on residues Ser368, Ser371, Ser398, and Ser414. The segment at 491 to 503 is interaction with NOS1; the sequence is QELGDSLDDEIAV. The PDZ-binding motif lies at 501-503; it reads IAV.

As to quaternary structure, interacts with the PDZ domain of NOS1 or the second PDZ domain of DLG4 through its C-terminus. Interacts with RASD1 and SYN1, SYN2 and SYN3 via its PID domain. Forms a ternary complex with NOS1 and RASD1. Forms a ternary complex with NOS1 and SYN1. As to expression, mainly expressed in brain. Highly expressed in accessory olfactory bulb, caudate-putamen, cerebellum, cerebral cortex, dentate gyrus of the hippocampus, islands of Calleja, olfactory bulb and supraoptic nucleus. Expressed in kidney glomeruli podocytes (at protein level).

It is found in the cell projection. The protein localises to the filopodium. It localises to the podosome. In terms of biological role, adapter protein involved in neuronal nitric-oxide (NO) synthesis regulation via its association with nNOS/NOS1. The complex formed with NOS1 and synapsins is necessary for specific NO and synapsin functions at a presynaptic level. Mediates an indirect interaction between NOS1 and RASD1 leading to enhance the ability of NOS1 to activate RASD1. Competes with DLG4 for interaction with NOS1, possibly affecting NOS1 activity by regulating the interaction between NOS1 and DLG4. In kidney podocytes, plays a role in podosomes and filopodia formation through CDC42 activation. The polypeptide is Carboxyl-terminal PDZ ligand of neuronal nitric oxide synthase protein (Rattus norvegicus (Rat)).